Reading from the N-terminus, the 406-residue chain is Bifunctional enzyme IspD/IspF (406 aa).

The 2-C-methyl-D-erythritol 4-phosphate cytidylyltransferase stretch occupies residues 1 to 247; it reads MSLIRVNGEA…TPFFNPAKDT (247 aa). The tract at residues 248–406 is 2-C-methyl-D-erythritol 2,4-cyclodiphosphate synthase; that stretch reads FIGMGFDTHA…HASMRYKQKL (159 aa). A divalent metal cation-binding residues include aspartate 254 and histidine 256. 4-CDP-2-C-methyl-D-erythritol 2-phosphate contacts are provided by residues 254–256 and 280–281; these read DTH and HS. Histidine 288 serves as a coordination point for a divalent metal cation. Residues 302–304, 307–311, 378–381, and phenylalanine 385 contribute to the 4-CDP-2-C-methyl-D-erythritol 2-phosphate site; these read DIG, FPDND, and TTME.

This sequence in the N-terminal section; belongs to the IspD/TarI cytidylyltransferase family. IspD subfamily. The protein in the C-terminal section; belongs to the IspF family. A divalent metal cation is required as a cofactor.

It carries out the reaction 2-C-methyl-D-erythritol 4-phosphate + CTP + H(+) = 4-CDP-2-C-methyl-D-erythritol + diphosphate. The catalysed reaction is 4-CDP-2-C-methyl-D-erythritol 2-phosphate = 2-C-methyl-D-erythritol 2,4-cyclic diphosphate + CMP. The protein operates within isoprenoid biosynthesis; isopentenyl diphosphate biosynthesis via DXP pathway; isopentenyl diphosphate from 1-deoxy-D-xylulose 5-phosphate: step 2/6. It functions in the pathway isoprenoid biosynthesis; isopentenyl diphosphate biosynthesis via DXP pathway; isopentenyl diphosphate from 1-deoxy-D-xylulose 5-phosphate: step 4/6. In terms of biological role, bifunctional enzyme that catalyzes the formation of 4-diphosphocytidyl-2-C-methyl-D-erythritol from CTP and 2-C-methyl-D-erythritol 4-phosphate (MEP) (IspD), and catalyzes the conversion of 4-diphosphocytidyl-2-C-methyl-D-erythritol 2-phosphate (CDP-ME2P) to 2-C-methyl-D-erythritol 2,4-cyclodiphosphate (ME-CPP) with a corresponding release of cytidine 5-monophosphate (CMP) (IspF). The protein is Bifunctional enzyme IspD/IspF of Helicobacter acinonychis (strain Sheeba).